Consider the following 368-residue polypeptide: Peptide chain release factor 2 (368 aa).

N5-methylglutamine is present on glutamine 251.

It belongs to the prokaryotic/mitochondrial release factor family. In terms of processing, methylated by PrmC. Methylation increases the termination efficiency of RF2.

It is found in the cytoplasm. Functionally, peptide chain release factor 2 directs the termination of translation in response to the peptide chain termination codons UGA and UAA. This is Peptide chain release factor 2 from Wolinella succinogenes (strain ATCC 29543 / DSM 1740 / CCUG 13145 / JCM 31913 / LMG 7466 / NCTC 11488 / FDC 602W) (Vibrio succinogenes).